Consider the following 266-residue polypeptide: uncharacterized protein (266 aa).

The protein belongs to the chlamydial CPn_0087/CT_309/TC_0583 family.

This is an uncharacterized protein from Chlamydia pneumoniae (Chlamydophila pneumoniae).